The sequence spans 91 residues: Putative regulatory protein Cyan7425_4125 (91 aa).

It belongs to the RemA family.

The sequence is that of Putative regulatory protein Cyan7425_4125 from Cyanothece sp. (strain PCC 7425 / ATCC 29141).